The chain runs to 501 residues: Glycosyltransferase family 92 protein F13G3.3 (501 aa).

The chain crosses the membrane as a helical span at residues 10-30 (LSVVLLFSFLFFVTAVLLQFI). The 289-residue stretch at 151–439 (KPVVMCISPL…ISDCYKQSYY (289 aa)) folds into the GT92 domain.

Belongs to the glycosyltransferase 92 family.

It is found in the membrane. The protein is Glycosyltransferase family 92 protein F13G3.3 of Caenorhabditis elegans.